The chain runs to 252 residues: MGKEIISSKDLHLYYGKKEALKGIDLTFNQGELTAMIGPSGCGKSTYLRCLNRMNDLIPDVTITGSVVYKGKDIYGPKTDNVELRKEIGMVFQQPNPFPFSVYENVIYGLRLKGVKDKQVLDEAVETSLKAAAVWEDVKDKLHKSALSLSGGQQQRVCIARVLAVEPDIILLDEPTSALDPVSSGKIENMLLTLKEKYTMIMVTHNMSQASRISDKTAFFLQGDLIEFNDTKKVFLNPKEKQTEDYISGKFG.

In terms of domain architecture, ABC transporter spans isoleucine 6–isoleucine 247. Glycine 38–serine 45 serves as a coordination point for ATP.

This sequence belongs to the ABC transporter superfamily. Phosphate importer (TC 3.A.1.7) family. In terms of assembly, the complex is composed of two ATP-binding proteins (PstB), two transmembrane proteins (PstC and PstA) and a solute-binding protein (PstS).

The protein resides in the cell membrane. It catalyses the reaction phosphate(out) + ATP + H2O = ADP + 2 phosphate(in) + H(+). Functionally, part of the ABC transporter complex PstSACB involved in phosphate import. Responsible for energy coupling to the transport system. The chain is Phosphate import ATP-binding protein PstB 1 from Enterococcus faecalis (strain ATCC 700802 / V583).